Consider the following 133-residue polypeptide: T-cell receptor beta chain V region 86T1 (133 aa).

The first 21 residues, 1-21 (MSCRLLLYVSLCLVETALMNT), serve as a signal peptide directing secretion. A v segment region spans residues 22–113 (KITQSPRYLI…SAVYFCASSH (92 aa)). Residues N36 and N75 are each glycosylated (N-linked (GlcNAc...) asparagine). C41 and C109 form a disulfide bridge. Positions 114-133 (GQGVSGNTLYFGEGSRLIVV) are j segment.

In Mus musculus (Mouse), this protein is T-cell receptor beta chain V region 86T1.